Consider the following 3767-residue polypeptide: Transmembrane cell adhesion receptor mua-3 (3767 aa).

The signal sequence occupies residues 1-24; that stretch reads MQAGISIFFLFLHIPIFFVNCSNS. The Extracellular segment spans residues 25 to 3417; that stretch reads TSCVAREEFQ…CQVAPSNASL (3393 aa). In terms of domain architecture, LDL-receptor class A 1 spans 26–63; the sequence is SCVAREEFQCKMDDSCISMKKWQDGVDDCYDGSDEVCL. Intrachain disulfides connect cysteine 27–cysteine 41, cysteine 35–cysteine 54, cysteine 62–cysteine 76, cysteine 69–cysteine 89, cysteine 97–cysteine 110, cysteine 104–cysteine 123, cysteine 131–cysteine 144, cysteine 138–cysteine 157, cysteine 165–cysteine 179, and cysteine 172–cysteine 192. 3 consecutive LDL-receptor class A domains span residues 96–132, 133–166, and 167–209; these read GCPA…EPCA, QNQF…EECT, and TSQF…ANCT. Residues asparagine 201 and asparagine 207 are each glycosylated (N-linked (GlcNAc...) asparagine). 17 consecutive EGF-like domains span residues 225–268, 375–416, 418–466, 468–517, 519–566, 614–663, 665–713, 714–760, 762–810, 816–860, 861–908, 910–961, 963–1012, 1029–1070, 1071–1118, 1120–1168, and 1170–1219; these read KLKF…DKCI, NRDD…GTCR, LIDE…RKCR, LINE…RNCT, AINE…RKCV, RANP…RKCV, AVDE…RSCK, KADM…RVCR, VVNE…KNCV, DPPE…GRCV, VINE…RICR, RVNE…RRCI, AVNE…RICT, TDDG…GSCR, VYSA…RICK, LINE…RQCT, and SNNE…RVCT. Disulfide bonds link cysteine 229/cysteine 243, cysteine 235/cysteine 252, cysteine 254/cysteine 267, cysteine 381/cysteine 392, cysteine 386/cysteine 402, cysteine 404/cysteine 415, cysteine 422/cysteine 435, cysteine 429/cysteine 444, cysteine 446/cysteine 465, cysteine 472/cysteine 486, cysteine 480/cysteine 495, cysteine 497/cysteine 516, cysteine 523/cysteine 536, cysteine 530/cysteine 545, cysteine 547/cysteine 565, cysteine 618/cysteine 632, cysteine 626/cysteine 642, cysteine 644/cysteine 662, cysteine 669/cysteine 682, cysteine 676/cysteine 691, cysteine 693/cysteine 712, cysteine 718/cysteine 729, cysteine 723/cysteine 738, cysteine 740/cysteine 759, cysteine 766/cysteine 779, cysteine 773/cysteine 788, cysteine 790/cysteine 809, cysteine 820/cysteine 836, cysteine 828/cysteine 845, cysteine 847/cysteine 859, cysteine 865/cysteine 879, cysteine 873/cysteine 888, cysteine 890/cysteine 907, cysteine 914/cysteine 930, cysteine 924/cysteine 939, cysteine 941/cysteine 960, cysteine 967/cysteine 981, cysteine 975/cysteine 990, cysteine 992/cysteine 1011, cysteine 1033/cysteine 1046, cysteine 1040/cysteine 1055, cysteine 1057/cysteine 1069, cysteine 1075/cysteine 1087, cysteine 1081/cysteine 1096, cysteine 1098/cysteine 1117, cysteine 1124/cysteine 1137, cysteine 1131/cysteine 1146, cysteine 1148/cysteine 1167, cysteine 1174/cysteine 1188, cysteine 1182/cysteine 1197, and cysteine 1199/cysteine 1218. The N-linked (GlcNAc...) asparagine glycan is linked to asparagine 383. A glycan (N-linked (GlcNAc...) asparagine) is linked at asparagine 515. Positions 1230-1406 constitute a VWFA domain; the sequence is DLVFLIDGSG…DLDTRLRSMI (177 aa). Residue asparagine 1350 is glycosylated (N-linked (GlcNAc...) asparagine). EGF-like domains are found at residues 1421 to 1466, 1466 to 1510, 1521 to 1562, 1563 to 1608, 1608 to 1656, 1658 to 1706, 1708 to 1755, 1759 to 1807, 1809 to 1860, 1862 to 1911, 1913 to 1961, 1963 to 2011, 2014 to 2062, 2068 to 2112, 2113 to 2160, 2162 to 2208, 2210 to 2258, 2260 to 2308, 2310 to 2358, 2360 to 2408, 2409 to 2455, 2456 to 2504, 2513 to 2563, 2565 to 2616, 2618 to 2666, 2668 to 2714, 2716 to 2763, 2763 to 2811, and 2833 to 2872; these read SEDV…RVCG, GGDL…GFCV, HDAN…GQCA, YPGS…DICL, LKNE…RVCV, LQNE…MVCK, LVNE…RRCE, TNDK…RLCI, VIPE…RLCK, LQNE…RKCK, LINE…RRCL, RINE…RICR, LVDE…RLCQ, PPPE…GSCS, IINE…RMCK, MVNE…RICK, LTNE…RACR, LVNE…RVCL, FINE…RVCV, LVDE…RVCS, APEV…RVCV, RNNA…RVCE, PRHP…RLCV, TEPV…RICK, LINE…RICS, SVNE…HRCS, MINE…RICR, RLNE…RICI, and REFP…GKCQ. 66 disulfides stabilise this stretch: cysteine 1425–cysteine 1441, cysteine 1433–cysteine 1450, cysteine 1452–cysteine 1465, cysteine 1470–cysteine 1484, cysteine 1478–cysteine 1494, cysteine 1496–cysteine 1509, cysteine 1525–cysteine 1538, cysteine 1532–cysteine 1547, cysteine 1549–cysteine 1561, cysteine 1567–cysteine 1583, cysteine 1575–cysteine 1592, cysteine 1594–cysteine 1607, cysteine 1612–cysteine 1625, cysteine 1619–cysteine 1634, cysteine 1636–cysteine 1655, cysteine 1662–cysteine 1675, cysteine 1669–cysteine 1684, cysteine 1686–cysteine 1705, cysteine 1712–cysteine 1726, cysteine 1720–cysteine 1735, cysteine 1737–cysteine 1754, cysteine 1763–cysteine 1776, cysteine 1770–cysteine 1786, cysteine 1788–cysteine 1806, cysteine 1813–cysteine 1829, cysteine 1821–cysteine 1838, cysteine 1840–cysteine 1859, cysteine 1866–cysteine 1880, cysteine 1873–cysteine 1889, cysteine 1891–cysteine 1910, cysteine 1917–cysteine 1930, cysteine 1924–cysteine 1939, cysteine 1941–cysteine 1960, cysteine 1967–cysteine 1980, cysteine 1974–cysteine 1989, cysteine 1991–cysteine 2010, cysteine 2018–cysteine 2031, cysteine 2025–cysteine 2040, cysteine 2042–cysteine 2061, cysteine 2072–cysteine 2088, cysteine 2080–cysteine 2097, cysteine 2099–cysteine 2111, cysteine 2117–cysteine 2131, cysteine 2125–cysteine 2140, cysteine 2142–cysteine 2159, cysteine 2166–cysteine 2180, cysteine 2174–cysteine 2189, cysteine 2191–cysteine 2207, cysteine 2214–cysteine 2228, cysteine 2222–cysteine 2237, cysteine 2239–cysteine 2257, cysteine 2264–cysteine 2278, cysteine 2272–cysteine 2287, cysteine 2289–cysteine 2307, cysteine 2314–cysteine 2327, cysteine 2321–cysteine 2336, cysteine 2338–cysteine 2357, cysteine 2364–cysteine 2377, cysteine 2371–cysteine 2386, cysteine 2388–cysteine 2407, cysteine 2413–cysteine 2425, cysteine 2419–cysteine 2435, cysteine 2437–cysteine 2454, cysteine 2460–cysteine 2474, cysteine 2468–cysteine 2483, and cysteine 2485–cysteine 2503. The interval 2492–2521 is disordered; the sequence is RSPDSSQRGRVCEPPPPPSPPPRHPCQDPE. Residues 2504-2515 are compositionally biased toward pro residues; the sequence is EPPPPPSPPPRH. Intrachain disulfides connect cysteine 2517/cysteine 2531, cysteine 2525/cysteine 2541, cysteine 2543/cysteine 2562, cysteine 2569/cysteine 2583, cysteine 2577/cysteine 2594, cysteine 2596/cysteine 2615, cysteine 2622/cysteine 2636, cysteine 2630/cysteine 2645, cysteine 2647/cysteine 2665, cysteine 2672/cysteine 2686, cysteine 2680/cysteine 2695, cysteine 2697/cysteine 2713, cysteine 2720/cysteine 2734, cysteine 2728/cysteine 2743, cysteine 2745/cysteine 2762, cysteine 2767/cysteine 2781, cysteine 2775/cysteine 2790, cysteine 2792/cysteine 2810, cysteine 2837/cysteine 2850, cysteine 2842/cysteine 2856, and cysteine 2858/cysteine 2871. Residues 2873-2999 enclose the SEA 1 domain; the sequence is EVQETPFELR…GSLRVASDTD (127 aa). Asparagine 2944 is a glycosylation site (N-linked (GlcNAc...) asparagine). The region spanning 3009-3048 is the EGF-like 47 domain; the sequence is EWGNCGGMSCKEHLKEVCIAGHICGCPDGMKRRDANSECR. Intrachain disulfides connect cysteine 3013-cysteine 3026, cysteine 3018-cysteine 3032, and cysteine 3034-cysteine 3047. The region spanning 3049–3174 is the SEA 2 domain; sequence VVESWNVPLW…SELYLNPTQP (126 aa). Asparagine 3120 and asparagine 3130 each carry an N-linked (GlcNAc...) asparagine glycan. EGF-like domains lie at 3176 to 3220, 3224 to 3272, and 3272 to 3324; these read PFNP…KKCL, GFNE…SLCV, and VLDY…TLCM. Cystine bridges form between cysteine 3180-cysteine 3191, cysteine 3185-cysteine 3201, cysteine 3203-cysteine 3219, cysteine 3228-cysteine 3242, cysteine 3236-cysteine 3251, cysteine 3253-cysteine 3271, cysteine 3276-cysteine 3288, cysteine 3282-cysteine 3297, cysteine 3299-cysteine 3323, cysteine 3332-cysteine 3345, cysteine 3339-cysteine 3354, cysteine 3356-cysteine 3372, cysteine 3377-cysteine 3386, cysteine 3380-cysteine 3397, and cysteine 3399-cysteine 3408. The N-linked (GlcNAc...) asparagine glycan is linked to asparagine 3285. Residues 3328 to 3373 enclose the EGF-like 51; calcium-binding domain; sequence DVDECALGLNNCSGVAHCIDRAVGYTCKCPDGYIDGNPDEPGRVCG. A glycan (N-linked (GlcNAc...) asparagine; atypical) is linked at asparagine 3337. Asparagine 3338 carries N-linked (GlcNAc...) asparagine glycosylation. The region spanning 3373 to 3409 is the EGF-like 52 domain; sequence GALLCDLCNAHGDCVHNTATNNITCVCTDGWTGPQCQ. Asparagine 3394 is a glycosylation site (N-linked (GlcNAc...) asparagine). Asparagine 3414 carries an N-linked (GlcNAc...) asparagine glycan. A helical transmembrane segment spans residues 3418–3438; that stretch reads VLLILLALLFLLLTLCCLLYF. At 3439–3767 the chain is on the cytoplasmic side; that stretch reads CTKCHCFKGR…SQTSTHVTKK (329 aa). Residues 3582 to 3729 form a disordered region; that stretch reads TTTTDEQGNT…EEDVEHSVGD (148 aa). Residues 3588-3597 are compositionally biased toward polar residues; the sequence is QGNTIVTTTE. Low complexity predominate over residues 3630–3665; it reads QSQSQQQQSMSQGMSQSMSQHATSAGYSSSGMESSA. The segment covering 3675–3684 has biased composition (basic and acidic residues); that stretch reads HTGERERGGS. A compositionally biased stretch (low complexity) spans 3690–3702; sequence IGRARGMAAASSG.

Expressed in the hypodermis at the sites of muscle contact, in striated muscles including body wall muscles, the anal sphincter muscles and the junctions between the anal sphincter muscle and rectal cuticle. Also expressed in non-muscle cells including the excretory duct cell and pore cells.

Its subcellular location is the cell membrane. The protein resides in the cell junction. It is found in the hemidesmosome. In terms of biological role, involved in cell adhesion and required for organ positioning and attachment. At the hypodermal surface, required for attachment of the hypdermermis to the basal cuticle in postembryonic development, possibly through intermediate filaments of the cytoskeleton. This Caenorhabditis elegans protein is Transmembrane cell adhesion receptor mua-3.